Reading from the N-terminus, the 91-residue chain is Probable Fe(2+)-trafficking protein (91 aa).

The protein belongs to the Fe(2+)-trafficking protein family.

Functionally, could be a mediator in iron transactions between iron acquisition and iron-requiring processes, such as synthesis and/or repair of Fe-S clusters in biosynthetic enzymes. The chain is Probable Fe(2+)-trafficking protein from Histophilus somni (strain 129Pt) (Haemophilus somnus).